Consider the following 402-residue polypeptide: Endo-polygalacturonase (402 aa).

The first 23 residues, 1 to 23, serve as a signal peptide directing secretion; sequence MEYQSGKRVLSLSLGLIGLFSAS. Disulfide bonds link Cys-41–Cys-62 and Cys-115–Cys-125. Asp-249 serves as the catalytic Proton donor. Residue His-277 is part of the active site.

This sequence belongs to the glycosyl hydrolase 28 family. As to quaternary structure, monomer.

The protein localises to the secreted. The catalysed reaction is (1,4-alpha-D-galacturonosyl)n+m + H2O = (1,4-alpha-D-galacturonosyl)n + (1,4-alpha-D-galacturonosyl)m.. Functionally, involved in maceration and soft-rotting of plant tissue. In Pectobacterium parmentieri, this protein is Endo-polygalacturonase (pehA).